The chain runs to 393 residues: S-adenosylmethionine synthase 4 (393 aa).

Mg(2+) is bound at residue Glu-9. An ATP-binding site is contributed by His-15. Residue Glu-43 participates in K(+) binding. Glu-56 and Gln-99 together coordinate L-methionine. Residues 167 to 169 (DGK), 235 to 238 (SGRF), Asp-246, 252 to 253 (RK), Ala-269, Lys-273, and Lys-277 contribute to the ATP site. Asp-246 provides a ligand contact to L-methionine. Residue Lys-277 coordinates L-methionine.

Belongs to the AdoMet synthase family. Homotetramer. It depends on Mn(2+) as a cofactor. Mg(2+) is required as a cofactor. The cofactor is Co(2+). Requires K(+) as cofactor. In terms of tissue distribution, detected in trichomes (at the protein level).

Its subcellular location is the cytoplasm. The catalysed reaction is L-methionine + ATP + H2O = S-adenosyl-L-methionine + phosphate + diphosphate. Its pathway is amino-acid biosynthesis; S-adenosyl-L-methionine biosynthesis; S-adenosyl-L-methionine from L-methionine: step 1/1. In terms of biological role, catalyzes the formation of S-adenosylmethionine from methionine and ATP. The reaction comprises two steps that are both catalyzed by the same enzyme: formation of S-adenosylmethionine (AdoMet) and triphosphate, and subsequent hydrolysis of the triphosphate. This is S-adenosylmethionine synthase 4 (METK4) from Arabidopsis thaliana (Mouse-ear cress).